A 260-amino-acid chain; its full sequence is 5'-nucleotidase SurE (260 aa).

A divalent metal cation-binding residues include D8, D9, S43, and N96.

This sequence belongs to the SurE nucleotidase family. It depends on a divalent metal cation as a cofactor.

The protein localises to the cytoplasm. The enzyme catalyses a ribonucleoside 5'-phosphate + H2O = a ribonucleoside + phosphate. Nucleotidase that shows phosphatase activity on nucleoside 5'-monophosphates. This Ruegeria sp. (strain TM1040) (Silicibacter sp.) protein is 5'-nucleotidase SurE.